Here is a 571-residue protein sequence, read N- to C-terminus: Proline--tRNA ligase (571 aa).

This sequence belongs to the class-II aminoacyl-tRNA synthetase family. ProS type 1 subfamily. In terms of assembly, homodimer.

The protein localises to the cytoplasm. The catalysed reaction is tRNA(Pro) + L-proline + ATP = L-prolyl-tRNA(Pro) + AMP + diphosphate. Functionally, catalyzes the attachment of proline to tRNA(Pro) in a two-step reaction: proline is first activated by ATP to form Pro-AMP and then transferred to the acceptor end of tRNA(Pro). As ProRS can inadvertently accommodate and process non-cognate amino acids such as alanine and cysteine, to avoid such errors it has two additional distinct editing activities against alanine. One activity is designated as 'pretransfer' editing and involves the tRNA(Pro)-independent hydrolysis of activated Ala-AMP. The other activity is designated 'posttransfer' editing and involves deacylation of mischarged Ala-tRNA(Pro). The misacylated Cys-tRNA(Pro) is not edited by ProRS. The chain is Proline--tRNA ligase from Shewanella baltica (strain OS155 / ATCC BAA-1091).